The sequence spans 194 residues: Probable GTP-binding protein EngB (194 aa).

Residues 22-194 (DLPEYALAGR…AWQFIKEGME (173 aa)) form the EngB-type G domain. Residues 30-37 (GRSNVGKS), 57-61 (GKTQT), 75-78 (DVPG), 142-145 (TKAD), and 174-176 (FSS) each bind GTP. Residues S37 and T59 each coordinate Mg(2+).

The protein belongs to the TRAFAC class TrmE-Era-EngA-EngB-Septin-like GTPase superfamily. EngB GTPase family. Mg(2+) serves as cofactor.

Functionally, necessary for normal cell division and for the maintenance of normal septation. The protein is Probable GTP-binding protein EngB of Listeria monocytogenes serovar 1/2a (strain ATCC BAA-679 / EGD-e).